The following is a 259-amino-acid chain: Thiazole synthase (259 aa).

Residue K100 is the Schiff-base intermediate with DXP of the active site. Residues G161, 187–188 (AG), and 209–210 (NT) contribute to the 1-deoxy-D-xylulose 5-phosphate site.

It belongs to the ThiG family. As to quaternary structure, homotetramer. Forms heterodimers with either ThiH or ThiS.

The protein localises to the cytoplasm. The enzyme catalyses [ThiS sulfur-carrier protein]-C-terminal-Gly-aminoethanethioate + 2-iminoacetate + 1-deoxy-D-xylulose 5-phosphate = [ThiS sulfur-carrier protein]-C-terminal Gly-Gly + 2-[(2R,5Z)-2-carboxy-4-methylthiazol-5(2H)-ylidene]ethyl phosphate + 2 H2O + H(+). The protein operates within cofactor biosynthesis; thiamine diphosphate biosynthesis. Its function is as follows. Catalyzes the rearrangement of 1-deoxy-D-xylulose 5-phosphate (DXP) to produce the thiazole phosphate moiety of thiamine. Sulfur is provided by the thiocarboxylate moiety of the carrier protein ThiS. In vitro, sulfur can be provided by H(2)S. The chain is Thiazole synthase from Methylobacillus flagellatus (strain ATCC 51484 / DSM 6875 / VKM B-1610 / KT).